We begin with the raw amino-acid sequence, 474 residues long: Probable periplasmic serine endoprotease DegP-like (474 aa).

An N-terminal signal peptide occupies residues 1–25 (MRNLKSVTPLLMAALLWGQSLLAQA). Active-site charge relay system residues include His113, Asp143, and Ser216. Substrate-binding positions include 214–216 (GNS) and 271–275 (LGVVI). PDZ domains lie at 260 to 351 (LKAD…VRDG) and 357 to 463 (KVTI…LRQG).

It belongs to the peptidase S1C family.

The protein localises to the periplasm. It catalyses the reaction Acts on substrates that are at least partially unfolded. The cleavage site P1 residue is normally between a pair of hydrophobic residues, such as Val-|-Val.. Might be efficient in the degradation of transiently denatured and unfolded proteins which accumulate in the periplasm following stress conditions. This chain is Probable periplasmic serine endoprotease DegP-like, found in Ectopseudomonas mendocina (strain ymp) (Pseudomonas mendocina).